The sequence spans 454 residues: L-cysteine desulfhydrase-like protein lolT1 (454 aa).

At lysine 227 the chain carries N6-(pyridoxal phosphate)lysine.

It belongs to the class-V pyridoxal-phosphate-dependent aminotransferase family. Requires pyridoxal 5'-phosphate as cofactor.

It functions in the pathway alkaloid biosynthesis. In terms of biological role, L-cysteine desulfhydrase-like protein; part of the gene cluster that mediates the biosynthesis of loline alkaloids, potent insecticidal agents composed of a pyrrolizidine ring system and an uncommon ether bridge linking carbons 2 and 7. Lolines are structurally differentiated by the various modifications of the L-amino group and include norloline, loline, N-methylloline, N-acetylloline, N-acetylnorloline, and N-formylloline. The first committed step is the condensation of O-acetyl-L-homoserine (derived from L-aspartic acid) and L-proline, probably catalyzed by the gamma-type pyridoxal 5'-phosphate(PLP)-dependent enzyme lolC, to give the diamino diacid, NACPP. Ensuing cyclization, decarboxylation, and acetylation steps yield 1-exo-acetamidopyrrolizidine (AcAP). LolO is required for installation of the ether bridge upon the pathway intermediate, 1-exo-acetamidopyrrolizidine (AcAP). In sequential 2-oxoglutarate- and O(2)-consuming steps, lolO removes hydrogens from C2 and C7 of AcAP to form both carbon-oxygen bonds in N-acetylnorloline (NANL), the precursor to all other lolines. The enzymes lolD, lolE, lolF and lolT have also been proposed to be involved in the ether-bridge installation. Further processing of the exocyclic moiety of NANL by fungal N-acetamidase (LolN), methyltransferase (LolM), and cytochrome P450 (LolP) enzymes, with occasional involvement of a plant acetyltransferase, generates the other known lolines. LolN transforms NANL to norlonine which is monomethylated and dimethylated to respectively lonine and N-methyllonine (NML) by lolM. LolP catalyzes hydroxylation of the methyl group in N-methylloline (NML) and further oxygenation to N-formylloline (NFL). A plant acetyltransferase is responsible for the acetylation of loline to form N-acetylloline (NAL). LolA might interact with aspartate kinase to prevent feedback inhibition of its activity by these end products and thereby promote production of L-homoserine from L-aspartate. The polypeptide is L-cysteine desulfhydrase-like protein lolT1 (Epichloe uncinata (Endophyte fungus)).